The chain runs to 441 residues: Phenylalanine-4-hydroxylase (441 aa).

The 80-residue stretch at 23–102 (FSISKGSDKI…KATTLQESSN (80 aa)) folds into the ACT domain. Fe cation-binding residues include H273, H278, and E318.

It belongs to the biopterin-dependent aromatic amino acid hydroxylase family. Homotetramer. The cofactor is Fe(2+).

It catalyses the reaction (6R)-L-erythro-5,6,7,8-tetrahydrobiopterin + L-phenylalanine + O2 = (4aS,6R)-4a-hydroxy-L-erythro-5,6,7,8-tetrahydrobiopterin + L-tyrosine. The enzyme catalyses (6R)-L-erythro-5,6,7,8-tetrahydrobiopterin + L-tryptophan + O2 = 5-hydroxy-L-tryptophan + (4aS,6R)-4a-hydroxy-L-erythro-5,6,7,8-tetrahydrobiopterin. Its pathway is amino-acid degradation; L-phenylalanine degradation; acetoacetate and fumarate from L-phenylalanine: step 1/6. Catalyzes the hydroxylation of L-phenylalanine. Hydroxylates L-tryptophan to 5-hydroxy-L-tryptophan but does not hydroxylate L-tyrosine to L-DOPA. It uses D-threo-tetrahydrodictyopterin (DH4), also known as dictyoperin, as a cofactor. The polypeptide is Phenylalanine-4-hydroxylase (pah) (Dictyostelium discoideum (Social amoeba)).